Here is a 600-residue protein sequence, read N- to C-terminus: DNA mismatch repair protein MutL (600 aa).

Positions 327 to 405 (DGSRAATTGA…FSPQPAAAEP (79 aa)) are disordered. The span at 349-367 (PNSQRPQTAWSAETSSSRP) shows a compositional bias: polar residues.

This sequence belongs to the DNA mismatch repair MutL/HexB family.

In terms of biological role, this protein is involved in the repair of mismatches in DNA. It is required for dam-dependent methyl-directed DNA mismatch repair. May act as a 'molecular matchmaker', a protein that promotes the formation of a stable complex between two or more DNA-binding proteins in an ATP-dependent manner without itself being part of a final effector complex. In Rhizobium johnstonii (strain DSM 114642 / LMG 32736 / 3841) (Rhizobium leguminosarum bv. viciae), this protein is DNA mismatch repair protein MutL.